Consider the following 135-residue polypeptide: MDRTVHSFVERLGIPREDLLLPCTFCSRFLTQEELTAFDFSAFNLVWRGRCAHGICTACARVCASLDLFLHHQNSRPLADVLRDENLTLHGLKARCRVCMKILSVTEKLECAERGESFAKVRGQWRARCRICKPV.

Zinc fingers lie at residues 23 to 59 (CTFCSRFLTQEELTAFDFSAFNLVWRGRCAHGICTAC) and 96 to 132 (CRVCMKILSVTEKLECAERGESFAKVRGQWRARCRIC).

This sequence belongs to the papillomaviridae E6 protein family. As to quaternary structure, forms homodimers. Interacts with ubiquitin-protein ligase UBE3A/E6-AP; this interaction stimulates UBE3A ubiquitin activity. Interacts with host BAK1.

It is found in the host cytoplasm. It localises to the host nucleus. In terms of biological role, plays a major role in the induction and maintenance of cellular transformation. E6 associates with host UBE3A/E6-AP ubiquitin-protein ligase and modulates its activity. Protects host keratinocytes from apoptosis by mediating the degradation of host BAK1. May also inhibit host immune response. In Mastomys natalensis papillomavirus (isolate African multimammate rat) (MnPV), this protein is Protein E6.